The following is a 284-amino-acid chain: MYVVSTKQMLNNARRGGYAVPAFNIHNLETMQVVVETAASMHAPVIIAGTPGTFTHAGTENLMALVSAMAKQYHHPLAIHLDHHTKFDDIAQKVRSGVRSVMIDASHLPFAQNISRVKEVVDFCHRFDVSVEAELGQLGGQEDDVQVNEADAFYTNPVQAREFAEATGIDSLAVAIGTAHGMYASAPALDFSRLENIRQWVNLPLVLHGASGLSTKDIQQTIKLGICKINVATELKNAFSQALKNYLTEYPEATDPRDYLQSAKSAMRDVVSKVIADCGCEGRA.

Asp82 functions as the Proton donor in the catalytic mechanism. 2 residues coordinate Zn(2+): His83 and His180. Gly181 serves as a coordination point for dihydroxyacetone phosphate. His208 provides a ligand contact to Zn(2+). Dihydroxyacetone phosphate contacts are provided by residues 209-211 (GAS) and 230-233 (NVAT).

It belongs to the class II fructose-bisphosphate aldolase family. TagBP aldolase GatY subfamily. Forms a complex with GatZ. Zn(2+) serves as cofactor.

The catalysed reaction is D-tagatofuranose 1,6-bisphosphate = D-glyceraldehyde 3-phosphate + dihydroxyacetone phosphate. Its pathway is carbohydrate metabolism; D-tagatose 6-phosphate degradation; D-glyceraldehyde 3-phosphate and glycerone phosphate from D-tagatose 6-phosphate: step 2/2. In terms of biological role, catalytic subunit of the tagatose-1,6-bisphosphate aldolase GatYZ, which catalyzes the reversible aldol condensation of dihydroxyacetone phosphate (DHAP or glycerone-phosphate) with glyceraldehyde 3-phosphate (G3P) to produce tagatose 1,6-bisphosphate (TBP). Requires GatZ subunit for full activity and stability. Is involved in the catabolism of galactitol. The sequence is that of D-tagatose-1,6-bisphosphate aldolase subunit GatY from Escherichia coli O45:K1 (strain S88 / ExPEC).